The following is a 188-amino-acid chain: Peptidyl-tRNA hydrolase (188 aa).

Phe14 lines the tRNA pocket. The Proton acceptor role is filled by His19. Residues Tyr64, Asn66, and Asn112 each contribute to the tRNA site.

It belongs to the PTH family. Monomer.

The protein resides in the cytoplasm. It catalyses the reaction an N-acyl-L-alpha-aminoacyl-tRNA + H2O = an N-acyl-L-amino acid + a tRNA + H(+). Functionally, hydrolyzes ribosome-free peptidyl-tRNAs (with 1 or more amino acids incorporated), which drop off the ribosome during protein synthesis, or as a result of ribosome stalling. Its function is as follows. Catalyzes the release of premature peptidyl moieties from peptidyl-tRNA molecules trapped in stalled 50S ribosomal subunits, and thus maintains levels of free tRNAs and 50S ribosomes. The protein is Peptidyl-tRNA hydrolase of Onion yellows phytoplasma (strain OY-M).